We begin with the raw amino-acid sequence, 103 residues long: Small ribosomal subunit protein uS10 (103 aa).

This sequence belongs to the universal ribosomal protein uS10 family. In terms of assembly, part of the 30S ribosomal subunit.

In terms of biological role, involved in the binding of tRNA to the ribosomes. The sequence is that of Small ribosomal subunit protein uS10 from Chlorobium luteolum (strain DSM 273 / BCRC 81028 / 2530) (Pelodictyon luteolum).